The following is a 37-amino-acid chain: Cytochrome b6-f complex subunit 5 (37 aa).

A helical membrane pass occupies residues 5–25 (LLFGIVLGLIPVTLTGLFVAA).

It belongs to the PetG family. The 4 large subunits of the cytochrome b6-f complex are cytochrome b6, subunit IV (17 kDa polypeptide, PetD), cytochrome f and the Rieske protein, while the 4 small subunits are PetG, PetL, PetM and PetN. The complex functions as a dimer.

The protein localises to the plastid. It localises to the chloroplast thylakoid membrane. Component of the cytochrome b6-f complex, which mediates electron transfer between photosystem II (PSII) and photosystem I (PSI), cyclic electron flow around PSI, and state transitions. PetG is required for either the stability or assembly of the cytochrome b6-f complex. The chain is Cytochrome b6-f complex subunit 5 from Guillardia theta (Cryptophyte).